Reading from the N-terminus, the 334-residue chain is G2/mitotic-specific cyclin-1 (334 aa).

Belongs to the cyclin family. Cyclin AB subfamily.

In terms of biological role, essential for the control of the cell cycle at the G2/M (mitosis) transition. The polypeptide is G2/mitotic-specific cyclin-1 (CYC1) (Trypanosoma brucei brucei).